Reading from the N-terminus, the 101-residue chain is Cell division protein FtsB (101 aa).

Residues 1-3 (MRI) lie on the Cytoplasmic side of the membrane. Residues 4-21 (VIYSMLVLLIAIQYPLWL) form a helical membrane-spanning segment. Topologically, residues 22-101 (GKGGWLKVYE…KSSDTQVTKQ (80 aa)) are periplasmic. Residues 33 to 53 (ERQVELQEAKNSLLALRNAKL) are a coiled coil.

It belongs to the FtsB family. Part of a complex composed of FtsB, FtsL and FtsQ.

The protein localises to the cell inner membrane. Essential cell division protein. May link together the upstream cell division proteins, which are predominantly cytoplasmic, with the downstream cell division proteins, which are predominantly periplasmic. In Polynucleobacter necessarius subsp. necessarius (strain STIR1), this protein is Cell division protein FtsB.